The following is a 969-amino-acid chain: RNA polymerase-associated protein RapA (969 aa).

Residues 164–334 (EVGRRYAPRV…FARLRLLDPD (171 aa)) enclose the Helicase ATP-binding domain. 177 to 184 (DEVGLGKT) serves as a coordination point for ATP. Positions 280 to 283 (DEAH) match the DEAH box motif. The Helicase C-terminal domain maps to 492–668 (RVNWLLELLK…GKSDGLESLI (177 aa)).

It belongs to the SNF2/RAD54 helicase family. RapA subfamily. In terms of assembly, interacts with the RNAP. Has a higher affinity for the core RNAP than for the holoenzyme. Its ATPase activity is stimulated by binding to RNAP.

Its function is as follows. Transcription regulator that activates transcription by stimulating RNA polymerase (RNAP) recycling in case of stress conditions such as supercoiled DNA or high salt concentrations. Probably acts by releasing the RNAP, when it is trapped or immobilized on tightly supercoiled DNA. Does not activate transcription on linear DNA. Probably not involved in DNA repair. The chain is RNA polymerase-associated protein RapA from Aliivibrio fischeri (strain MJ11) (Vibrio fischeri).